An 82-amino-acid polypeptide reads, in one-letter code: Omega-conotoxin-like TxO6 (82 aa).

Positions methionine 1–alanine 22 are cleaved as a signal peptide. Positions aspartate 23–lysine 50 are excised as a propeptide. 3 cysteine pairs are disulfide-bonded: cysteine 53–cysteine 71, cysteine 60–cysteine 76, and cysteine 70–cysteine 81.

It belongs to the conotoxin O1 superfamily. As to expression, expressed by the venom duct.

It is found in the secreted. Omega-conotoxins act at presynaptic membranes, they bind and block voltage-gated calcium channels (Cav). This chain is Omega-conotoxin-like TxO6, found in Conus textile (Cloth-of-gold cone).